A 1145-amino-acid polypeptide reads, in one-letter code: Protein sumv-2 (1145 aa).

Positions 1–13 (MKPGRKSLPKKNR) are enriched in basic residues. 5 disordered regions span residues 1–310 (MKPG…APPA), 429–464 (QSRTKLKGSSKEREETPAFDEESPIGGDEKRQQKAR), 999–1025 (HSASSSAAPSPVGASGRRATVTGAGSE), 1040–1059 (QIAAPSISGPPPPAPSPRTE), and 1073–1145 (ITTG…ISLI). A compositionally biased stretch (polar residues) spans 14–34 (ASNITEKMPTTSTEAQSSSSK). 2 stretches are compositionally biased toward basic and acidic residues: residues 73-104 (KTTEEVKSPRKSARKSELKKPEPEEKAKEPRK) and 216-225 (VPEKKPKIED). Low complexity predominate over residues 226-248 (APTTSSPKKSTPTSAPPTRASAR). The span at 455–464 (GDEKRQQKAR) shows a compositional bias: basic and acidic residues. Residues 999 to 1013 (HSASSSAAPSPVGAS) are compositionally biased toward low complexity. A compositionally biased stretch (basic and acidic residues) spans 1091 to 1102 (VIERGDFRDHRP). The span at 1121–1136 (QQPPLPSPAPPPPRGP) shows a compositional bias: pro residues.

Functionally, influences the activity of genes involved in vulval development. This chain is Protein sumv-2, found in Caenorhabditis elegans.